The sequence spans 235 residues: Putative quercetin 2,3-dioxygenase ZMO1337 (235 aa).

Residues H57, H59, H101, and E103 each contribute to the a divalent metal cation site.

Belongs to the pirin family. The cofactor is a divalent metal cation.

The catalysed reaction is quercetin + O2 = 2-(3,4-dihydroxybenzoyloxy)-4,6-dihydroxybenzoate + CO. It functions in the pathway flavonoid metabolism; quercetin degradation. Putative quercetin 2,3-dioxygenase. This chain is Putative quercetin 2,3-dioxygenase ZMO1337, found in Zymomonas mobilis subsp. mobilis (strain ATCC 31821 / ZM4 / CP4).